Consider the following 152-residue polypeptide: MGLSTLEQKLTEMITAPVEALGFELVGIEFIRGHTSTLRIYIDSEDGINVDDCADVSHQVSAVLDVEDPITVAYNLEVSSPGLDRPLFTAEHYARFVGEEVTLVLRMAVQNRRKWQGVIKAVDGEMITVTVEGKDEVFALSNIQKANLVPHF.

This sequence belongs to the RimP family.

It is found in the cytoplasm. Functionally, required for maturation of 30S ribosomal subunits. The chain is Ribosome maturation factor RimP from Shigella boydii serotype 4 (strain Sb227).